We begin with the raw amino-acid sequence, 97 residues long: Putative CC-type chemokine U83 (97 aa).

2 disulfides stabilise this stretch: C32–C62 and C33–C76.

The protein belongs to the intercrine beta (chemokine CC) family. Highly divergent.

This is Putative CC-type chemokine U83 (U83) from Human herpesvirus 6A (strain Uganda-1102) (HHV-6 variant A).